A 419-amino-acid polypeptide reads, in one-letter code: L-rhamnose isomerase (419 aa).

Positions 262, 294, and 296 each coordinate Mn(2+).

This sequence belongs to the rhamnose isomerase family. As to quaternary structure, homotetramer. It depends on Mn(2+) as a cofactor.

The protein resides in the cytoplasm. The catalysed reaction is L-rhamnopyranose = L-rhamnulose. The protein operates within carbohydrate degradation; L-rhamnose degradation; glycerone phosphate from L-rhamnose: step 1/3. Functionally, catalyzes the interconversion of L-rhamnose and L-rhamnulose. This Escherichia fergusonii (strain ATCC 35469 / DSM 13698 / CCUG 18766 / IAM 14443 / JCM 21226 / LMG 7866 / NBRC 102419 / NCTC 12128 / CDC 0568-73) protein is L-rhamnose isomerase.